Consider the following 87-residue polypeptide: Kappa-3-bungarotoxin (87 aa).

The first 21 residues, 1–21, serve as a signal peptide directing secretion; the sequence is MKTLLLSLVVVTIVCLDLGYT. 5 cysteine pairs are disulfide-bonded: Cys-24–Cys-42, Cys-35–Cys-63, Cys-48–Cys-52, Cys-67–Cys-79, and Cys-80–Cys-85.

The protein belongs to the three-finger toxin family. Long-chain subfamily. Kappa-neurotoxin sub-subfamily. In terms of assembly, homodimer and heterodimer with kappa 2-bungarotoxin; non-covalently-linked. In terms of tissue distribution, expressed by the venom gland.

The protein resides in the secreted. In terms of biological role, postsynaptic neurotoxin that binds and inhibits neuronal nicotinic acetylcholine receptors (nAChR) with high affinity (IC(50)&lt;100 nM). Is a selective, and slowly reversible antagonist of alpha-3/CHRNA3-containing and some alpha-4/CHRNA4-containing AChRs. This Bungarus multicinctus (Many-banded krait) protein is Kappa-3-bungarotoxin.